Consider the following 319-residue polypeptide: Ribose-phosphate pyrophosphokinase (319 aa).

ATP-binding positions include 41–43 and 100–101; these read DGE and RQ. Mg(2+)-binding residues include His-134 and Asp-176. Lys-199 is an active-site residue. Residues Arg-201, Asp-225, and 229 to 233 contribute to the D-ribose 5-phosphate site; that span reads DTAGT.

The protein belongs to the ribose-phosphate pyrophosphokinase family. Class I subfamily. Homohexamer. Mg(2+) is required as a cofactor.

It is found in the cytoplasm. It catalyses the reaction D-ribose 5-phosphate + ATP = 5-phospho-alpha-D-ribose 1-diphosphate + AMP + H(+). Its pathway is metabolic intermediate biosynthesis; 5-phospho-alpha-D-ribose 1-diphosphate biosynthesis; 5-phospho-alpha-D-ribose 1-diphosphate from D-ribose 5-phosphate (route I): step 1/1. Its function is as follows. Involved in the biosynthesis of the central metabolite phospho-alpha-D-ribosyl-1-pyrophosphate (PRPP) via the transfer of pyrophosphoryl group from ATP to 1-hydroxyl of ribose-5-phosphate (Rib-5-P). The chain is Ribose-phosphate pyrophosphokinase from Clostridium perfringens (strain 13 / Type A).